Here is a 192-residue protein sequence, read N- to C-terminus: Protein GrpE (192 aa).

The interval 1–43 is disordered; sequence MQENKQPSEIQGELPQPPDGESVPPQPTNEQAPPDTDTMPRIE.

The protein belongs to the GrpE family. As to quaternary structure, homodimer.

Its subcellular location is the cytoplasm. Participates actively in the response to hyperosmotic and heat shock by preventing the aggregation of stress-denatured proteins, in association with DnaK and GrpE. It is the nucleotide exchange factor for DnaK and may function as a thermosensor. Unfolded proteins bind initially to DnaJ; upon interaction with the DnaJ-bound protein, DnaK hydrolyzes its bound ATP, resulting in the formation of a stable complex. GrpE releases ADP from DnaK; ATP binding to DnaK triggers the release of the substrate protein, thus completing the reaction cycle. Several rounds of ATP-dependent interactions between DnaJ, DnaK and GrpE are required for fully efficient folding. This is Protein GrpE from Aromatoleum aromaticum (strain DSM 19018 / LMG 30748 / EbN1) (Azoarcus sp. (strain EbN1)).